Reading from the N-terminus, the 475-residue chain is Ribulose bisphosphate carboxylase large chain (475 aa).

The propeptide occupies 1–2 (MS). P3 bears the N-acetylproline mark. Position 14 is an N6,N6,N6-trimethyllysine (K14). 2 residues coordinate substrate: N123 and T173. K175 (proton acceptor) is an active-site residue. Residue K177 coordinates substrate. Mg(2+) contacts are provided by K201, D203, and E204. K201 is modified (N6-carboxylysine). H294 (proton acceptor) is an active-site residue. Residues R295, H327, and S379 each contribute to the substrate site.

This sequence belongs to the RuBisCO large chain family. Type I subfamily. As to quaternary structure, heterohexadecamer of 8 large chains and 8 small chains; disulfide-linked. The disulfide link is formed within the large subunit homodimers. It depends on Mg(2+) as a cofactor. In terms of processing, the disulfide bond which can form in the large chain dimeric partners within the hexadecamer appears to be associated with oxidative stress and protein turnover.

The protein localises to the plastid. It localises to the chloroplast. It catalyses the reaction 2 (2R)-3-phosphoglycerate + 2 H(+) = D-ribulose 1,5-bisphosphate + CO2 + H2O. The enzyme catalyses D-ribulose 1,5-bisphosphate + O2 = 2-phosphoglycolate + (2R)-3-phosphoglycerate + 2 H(+). Its function is as follows. RuBisCO catalyzes two reactions: the carboxylation of D-ribulose 1,5-bisphosphate, the primary event in carbon dioxide fixation, as well as the oxidative fragmentation of the pentose substrate in the photorespiration process. Both reactions occur simultaneously and in competition at the same active site. In Pinus krempfii (Krempf's pine), this protein is Ribulose bisphosphate carboxylase large chain.